Reading from the N-terminus, the 447-residue chain is N-succinylarginine dihydrolase (447 aa).

Residues 19–28 (AGLSFGNEAS), Asn110, and 137–138 (HR) each bind substrate. Glu174 is a catalytic residue. Substrate is bound at residue Arg212. His248 is a catalytic residue. Residues Asp250 and Asn359 each contribute to the substrate site. Cys365 acts as the Nucleophile in catalysis.

It belongs to the succinylarginine dihydrolase family. Homodimer.

It catalyses the reaction N(2)-succinyl-L-arginine + 2 H2O + 2 H(+) = N(2)-succinyl-L-ornithine + 2 NH4(+) + CO2. The protein operates within amino-acid degradation; L-arginine degradation via AST pathway; L-glutamate and succinate from L-arginine: step 2/5. Functionally, catalyzes the hydrolysis of N(2)-succinylarginine into N(2)-succinylornithine, ammonia and CO(2). This chain is N-succinylarginine dihydrolase, found in Escherichia coli (strain SE11).